Here is a 217-residue protein sequence, read N- to C-terminus: GTPase IMAP family member GIMD1 (217 aa).

Residues 6 to 217 (KMIINLAVFG…ENHFQVLSLA (212 aa)) enclose the AIG1-type G domain. GTP contacts are provided by residues 15–23 (GRTQSGKSS), S36, and 148–150 (HAE).

It belongs to the TRAFAC class TrmE-Era-EngA-EngB-Septin-like GTPase superfamily. AIG1/Toc34/Toc159-like paraseptin GTPase family. IAN subfamily.

This chain is GTPase IMAP family member GIMD1 (Gimd1), found in Mus musculus (Mouse).